Here is a 398-residue protein sequence, read N- to C-terminus: 8-amino-7-oxononanoate synthase (398 aa).

R23 is a binding site for substrate. Residue G110–Y111 participates in pyridoxal 5'-phosphate binding. H135 serves as a coordination point for substrate. S181, H209, and T237 together coordinate pyridoxal 5'-phosphate. K240 is subject to N6-(pyridoxal phosphate)lysine. T354 contacts substrate.

This sequence belongs to the class-II pyridoxal-phosphate-dependent aminotransferase family. BioF subfamily. In terms of assembly, homodimer. Pyridoxal 5'-phosphate is required as a cofactor.

It catalyses the reaction 6-carboxyhexanoyl-[ACP] + L-alanine + H(+) = (8S)-8-amino-7-oxononanoate + holo-[ACP] + CO2. It participates in cofactor biosynthesis; biotin biosynthesis. Its function is as follows. Catalyzes the decarboxylative condensation of pimeloyl-[acyl-carrier protein] and L-alanine to produce 8-amino-7-oxononanoate (AON), [acyl-carrier protein], and carbon dioxide. In Anaeromyxobacter sp. (strain K), this protein is 8-amino-7-oxononanoate synthase.